A 182-amino-acid polypeptide reads, in one-letter code: Peptide deformylase (182 aa).

Fe cation-binding residues include Cys-110 and His-153. The active site involves Glu-154. His-157 provides a ligand contact to Fe cation.

Belongs to the polypeptide deformylase family. Fe(2+) serves as cofactor.

The catalysed reaction is N-terminal N-formyl-L-methionyl-[peptide] + H2O = N-terminal L-methionyl-[peptide] + formate. In terms of biological role, removes the formyl group from the N-terminal Met of newly synthesized proteins. Requires at least a dipeptide for an efficient rate of reaction. N-terminal L-methionine is a prerequisite for activity but the enzyme has broad specificity at other positions. This chain is Peptide deformylase, found in Halalkalibacterium halodurans (strain ATCC BAA-125 / DSM 18197 / FERM 7344 / JCM 9153 / C-125) (Bacillus halodurans).